Reading from the N-terminus, the 610-residue chain is Elongation factor 4 (610 aa).

The tr-type G domain occupies 13-195 (SHIRNFSIVA…AIVHKLPAPK (183 aa)). GTP-binding positions include 25 to 30 (DHGKST) and 142 to 145 (NKID).

This sequence belongs to the TRAFAC class translation factor GTPase superfamily. Classic translation factor GTPase family. LepA subfamily.

It localises to the cell inner membrane. It carries out the reaction GTP + H2O = GDP + phosphate + H(+). In terms of biological role, required for accurate and efficient protein synthesis under certain stress conditions. May act as a fidelity factor of the translation reaction, by catalyzing a one-codon backward translocation of tRNAs on improperly translocated ribosomes. Back-translocation proceeds from a post-translocation (POST) complex to a pre-translocation (PRE) complex, thus giving elongation factor G a second chance to translocate the tRNAs correctly. Binds to ribosomes in a GTP-dependent manner. The chain is Elongation factor 4 from Rhizobium etli (strain ATCC 51251 / DSM 11541 / JCM 21823 / NBRC 15573 / CFN 42).